The primary structure comprises 689 residues: Glycine--tRNA ligase beta subunit (689 aa).

This sequence belongs to the class-II aminoacyl-tRNA synthetase family. Tetramer of two alpha and two beta subunits.

The protein localises to the cytoplasm. The enzyme catalyses tRNA(Gly) + glycine + ATP = glycyl-tRNA(Gly) + AMP + diphosphate. This chain is Glycine--tRNA ligase beta subunit, found in Shewanella sp. (strain W3-18-1).